The primary structure comprises 287 residues: Fructose-1,6-bisphosphatase class 1 (287 aa).

Mg(2+) contacts are provided by glutamate 67, aspartate 87, leucine 89, and aspartate 90. Residues 90 to 93, tyrosine 195, and lysine 225 each bind substrate; that span reads DGSS. Glutamate 231 is a binding site for Mg(2+).

The protein belongs to the FBPase class 1 family. As to quaternary structure, homotetramer. Requires Mg(2+) as cofactor.

The protein resides in the cytoplasm. The catalysed reaction is beta-D-fructose 1,6-bisphosphate + H2O = beta-D-fructose 6-phosphate + phosphate. It participates in carbohydrate biosynthesis; gluconeogenesis. The protein is Fructose-1,6-bisphosphatase class 1 of Halobacterium salinarum (strain ATCC 29341 / DSM 671 / R1).